The sequence spans 357 residues: Dual-specificity RNA methyltransferase RlmN (357 aa).

E89 (proton acceptor) is an active-site residue. Residues 109-340 (EREKYTVCVS…CTIRESKALD (232 aa)) form the Radical SAM core domain. C116 and C345 are joined by a disulfide. The [4Fe-4S] cluster site is built by C123, C127, and C130. Residues 173-174 (GE), S203, 226-228 (SLH), and N302 contribute to the S-adenosyl-L-methionine site. C345 serves as the catalytic S-methylcysteine intermediate.

It belongs to the radical SAM superfamily. RlmN family. Requires [4Fe-4S] cluster as cofactor.

The protein localises to the cytoplasm. The enzyme catalyses adenosine(2503) in 23S rRNA + 2 reduced [2Fe-2S]-[ferredoxin] + 2 S-adenosyl-L-methionine = 2-methyladenosine(2503) in 23S rRNA + 5'-deoxyadenosine + L-methionine + 2 oxidized [2Fe-2S]-[ferredoxin] + S-adenosyl-L-homocysteine. It catalyses the reaction adenosine(37) in tRNA + 2 reduced [2Fe-2S]-[ferredoxin] + 2 S-adenosyl-L-methionine = 2-methyladenosine(37) in tRNA + 5'-deoxyadenosine + L-methionine + 2 oxidized [2Fe-2S]-[ferredoxin] + S-adenosyl-L-homocysteine. Specifically methylates position 2 of adenine 2503 in 23S rRNA and position 2 of adenine 37 in tRNAs. m2A2503 modification seems to play a crucial role in the proofreading step occurring at the peptidyl transferase center and thus would serve to optimize ribosomal fidelity. This chain is Dual-specificity RNA methyltransferase RlmN, found in Helicobacter pylori (strain ATCC 700392 / 26695) (Campylobacter pylori).